The primary structure comprises 564 residues: Ribonuclease J (564 aa).

Residues His-85, His-87, Asp-89, His-90, His-153, and Asp-175 each coordinate Zn(2+). His-375–His-379 lines the substrate pocket. Zn(2+) is bound at residue His-401.

It belongs to the metallo-beta-lactamase superfamily. RNA-metabolizing metallo-beta-lactamase-like family. Bacterial RNase J subfamily. Homodimer, may be a subunit of the RNA degradosome. Zn(2+) serves as cofactor.

It is found in the cytoplasm. An RNase that has 5'-3' exonuclease and possibly endonuclease activity. Plays a role in 16S and 23S rRNA processing. Might have a role in mRNA maturation and/or decay. The chain is Ribonuclease J from Sinorhizobium meliloti (strain Sm2011 / Rm2011 / 2011).